The primary structure comprises 289 residues: MRKELLLRTTNHSAFQNSVYLLGFLRFAKFQLSSRANISNVRPFKGRRTNCAATSVHSNRMEVTYLSQSLAQTIDNELMSDDVGYTTEQLMELAGLSIAQIICREYSLDRFKKVLIFCGPGNNGGDGLVAARHLKHFGYDVTVAYPKEKTKVLFQRLLKLLQHYHVPVVKSATGEDLKLYDLVVDALFGFSFTGEPRSPFDEIIHTINQSNKPVVSVDVPSGTNIDGGSAANALSVNSEMNISLMLPKEGVRHYGKKHYLGGRFIPNSIVEKYNLKVPQFAGDNSYVQL.

The YjeF N-terminal domain maps to 71-277 (AQTIDNELMS…SIVEKYNLKV (207 aa)). 122 to 126 (NNGGD) is a (6S)-NADPHX binding site. Asparagine 123 and aspartate 185 together coordinate K(+). (6S)-NADPHX-binding positions include 189–195 (GFSFTGE) and aspartate 218. Serine 221 provides a ligand contact to K(+).

This sequence belongs to the NnrE/AIBP family. The cofactor is K(+).

The enzyme catalyses (6R)-NADHX = (6S)-NADHX. It carries out the reaction (6R)-NADPHX = (6S)-NADPHX. In terms of biological role, catalyzes the epimerization of the S- and R-forms of NAD(P)HX, a damaged form of NAD(P)H that is a result of enzymatic or heat-dependent hydration. This is a prerequisite for the S-specific NAD(P)H-hydrate dehydratase to allow the repair of both epimers of NAD(P)HX. The sequence is that of NAD(P)H-hydrate epimerase from Plasmodium vivax (strain Salvador I).